Reading from the N-terminus, the 492-residue chain is Bifunctional purine biosynthesis protein PurH (492 aa).

Residues 1-144 (MKKVILSVSD…KNFKHVTTIV (144 aa)) form the MGS-like domain.

The protein belongs to the PurH family.

It catalyses the reaction (6R)-10-formyltetrahydrofolate + 5-amino-1-(5-phospho-beta-D-ribosyl)imidazole-4-carboxamide = 5-formamido-1-(5-phospho-D-ribosyl)imidazole-4-carboxamide + (6S)-5,6,7,8-tetrahydrofolate. The enzyme catalyses IMP + H2O = 5-formamido-1-(5-phospho-D-ribosyl)imidazole-4-carboxamide. It functions in the pathway purine metabolism; IMP biosynthesis via de novo pathway; 5-formamido-1-(5-phospho-D-ribosyl)imidazole-4-carboxamide from 5-amino-1-(5-phospho-D-ribosyl)imidazole-4-carboxamide (10-formyl THF route): step 1/1. Its pathway is purine metabolism; IMP biosynthesis via de novo pathway; IMP from 5-formamido-1-(5-phospho-D-ribosyl)imidazole-4-carboxamide: step 1/1. This chain is Bifunctional purine biosynthesis protein PurH, found in Staphylococcus carnosus (strain TM300).